Reading from the N-terminus, the 31-residue chain is U8-ctenitoxin-Co1a (31 aa).

Disulfide bonds link cysteine 4–cysteine 18 and cysteine 11–cysteine 24.

Expressed by the venom gland.

The protein localises to the secreted. Functionally, blocks voltage-gated sodium channels (Nav). This is U8-ctenitoxin-Co1a from Ctenus ornatus (Brazilian spider).